A 477-amino-acid chain; its full sequence is MIAFLLTSVLMIPHAGGHPLDTPHLPQELPPGLPNNINITFFSGMFKNVESVAEIFDCLGPHFTWLQAVFTNFPVLIQFVNGMKCVAGLCPRDFEDYGCTCRFEMEGLPVDESDSCCFQHRRCYEEAAEMDCLQDPAKLSTEVNCVSKKIICESKDNCEHLLCTCDKAAIECLARSSLNSSLNLLDTSFCLAQTPETTIKEDLTTLLPRVVPVEPTDTSLTALSGEEAGHDQEGVGAARATSPPGSAEIVATRVTAKIVTLVPAGIKSLGLAVSSVENDPEETTEKACDRFTFLHLGSGDNMQVMPQLGEMLFCLTSRCPEEFESYGCYCGQEGRGEPRDDLDRCCLSHHCCLEQVRRLGCLLERLPWSPVVCVDHTPKCGGQSLCEKLLCACDQTAAECMTSASFNQSLKSPSRLGCPGQPAACEDSLHPVPAAPTLGSSSEEDSEEDPPQEDLGRAKRFLRKSLGPLGIGPLHGR.

A signal peptide spans 1-17; the sequence is MIAFLLTSVLMIPHAGG. Asparagine 38 carries an N-linked (GlcNAc...) asparagine glycan. 3 phospholipase A2-like regions span residues 76–190, 305–361, and 373–425; these read LIQF…TSFC, MPQL…RLGC, and CVDH…PAAC. Disulfide bonds link cysteine 85-cysteine 145, cysteine 99-cysteine 190, cysteine 101-cysteine 117, cysteine 116-cysteine 172, cysteine 123-cysteine 165, cysteine 132-cysteine 158, and cysteine 152-cysteine 163. The N-linked (GlcNAc...) asparagine glycan is linked to asparagine 179. The N-linked (GlcNAc...) asparagine glycan is linked to asparagine 407. A disordered region spans residues 428-477; it reads SLHPVPAAPTLGSSSEEDSEEDPPQEDLGRAKRFLRKSLGPLGIGPLHGR. Positions 442–452 are enriched in acidic residues; sequence SEEDSEEDPPQ.

The protein belongs to the phospholipase A2 family. Interacts with OTOL1.

Its subcellular location is the secreted. In terms of biological role, major protein of the otoconia, a calcium carbonate structure in the saccule and utricle of the ear. Together with OTOL1, acts as a scaffold for otoconia biomineralization: sequesters calcium and forms interconnecting fibrils between otoconia that are incorporated into the calcium crystal structure. Together with OTOL1, modulates calcite crystal morphology and growth kinetics. It is unlikely that this protein has phospholipase A2 activity. The chain is Otoconin-90 from Homo sapiens (Human).